Consider the following 305-residue polypeptide: Dihydroorotate dehydrogenase B (NAD(+)), catalytic subunit (305 aa).

FMN contacts are provided by residues Ser-21 and 45–46 (KG). Residues Lys-45 and 69–73 (NAVGL) each bind substrate. The FMN site is built by Asn-99 and Asn-127. A substrate-binding site is contributed by Asn-127. Residue Cys-130 is the Nucleophile of the active site. Residues Lys-165 and Ile-191 each contribute to the FMN site. 192–193 (NT) provides a ligand contact to substrate. Residues Gly-217, 243 to 244 (GG), and 265 to 266 (GT) contribute to the FMN site.

Belongs to the dihydroorotate dehydrogenase family. Type 1 subfamily. As to quaternary structure, heterotetramer of 2 PyrK and 2 PyrD type B subunits. Requires FMN as cofactor.

The protein resides in the cytoplasm. It carries out the reaction (S)-dihydroorotate + NAD(+) = orotate + NADH + H(+). It participates in pyrimidine metabolism; UMP biosynthesis via de novo pathway; orotate from (S)-dihydroorotate (NAD(+) route): step 1/1. Its function is as follows. Catalyzes the conversion of dihydroorotate to orotate with NAD(+) as electron acceptor. The chain is Dihydroorotate dehydrogenase B (NAD(+)), catalytic subunit (pyrD) from Parabacteroides distasonis (strain ATCC 8503 / DSM 20701 / CIP 104284 / JCM 5825 / NCTC 11152).